Here is a 451-residue protein sequence, read N- to C-terminus: Secreted RxLR effector protein 111 (451 aa).

Positions 1–19 (MRGTLATALLLVASCRIAA) are cleaved as a signal peptide. A RxLR-dEER motif is present at residues 48-69 (RFLRDNREQRVALALTAANESR). Asn66 carries N-linked (GlcNAc...) asparagine glycosylation. Composition is skewed to polar residues over residues 175 to 184 (RKTLSKTQFK) and 413 to 426 (SPAS…QRTG). Disordered stretches follow at residues 175–194 (RKTL…STKR) and 404–451 (IPLQ…NKHA). The span at 437-451 (PERDSFRHIESNKHA) shows a compositional bias: basic and acidic residues.

This sequence belongs to the RxLR effector family.

It is found in the secreted. Its subcellular location is the host nucleus. Secreted effector that acts as an elicitor that induces cell death in host plant cells. This chain is Secreted RxLR effector protein 111, found in Plasmopara viticola (Downy mildew of grapevine).